Consider the following 242-residue polypeptide: 1-(5-phosphoribosyl)-5-[(5-phosphoribosylamino)methylideneamino] imidazole-4-carboxamide isomerase (242 aa).

Catalysis depends on aspartate 8, which acts as the Proton acceptor. Residue aspartate 129 is the Proton donor of the active site.

This sequence belongs to the HisA/HisF family.

The protein resides in the cytoplasm. It catalyses the reaction 1-(5-phospho-beta-D-ribosyl)-5-[(5-phospho-beta-D-ribosylamino)methylideneamino]imidazole-4-carboxamide = 5-[(5-phospho-1-deoxy-D-ribulos-1-ylimino)methylamino]-1-(5-phospho-beta-D-ribosyl)imidazole-4-carboxamide. It participates in amino-acid biosynthesis; L-histidine biosynthesis; L-histidine from 5-phospho-alpha-D-ribose 1-diphosphate: step 4/9. This is 1-(5-phosphoribosyl)-5-[(5-phosphoribosylamino)methylideneamino] imidazole-4-carboxamide isomerase from Maridesulfovibrio salexigens (strain ATCC 14822 / DSM 2638 / NCIMB 8403 / VKM B-1763) (Desulfovibrio salexigens).